The following is a 321-amino-acid chain: MASPGSSAPGGVAVVGSGLIGRSWAMLFASAGFRVKLFDIEPRQVTDALVSLRKEMKMLELSGYLKGELGAEEQLSLISGCSDLREAVEGALHVQECVPENLELKRKLFAQLDKIADDHVILSSSSSCLLPSKLFAGLAHVKQCLVAHPVNPPYYVPLVELVPHPETAPATVDRTYALMRRVGQSPVRLLREIDGFALNRLQYAVIAEAWRLVEEGVVSPGDLDLVMSDGLGLRYAFIGPLETMHLNAEGMLSYCDRYGEGMKRVLKTFGPVPEFSGATAEKVHQAMCVKVPDDAEHLAARRAWRDGCLMRLAQLKHQLPQ.

The residue at position 6 (S6) is a Phosphoserine. NAD(+) is bound by residues 19–20 (LI), D39, E100, and K105.

It belongs to the 3-hydroxyacyl-CoA dehydrogenase family. In terms of assembly, homodimer.

It is found in the cytoplasm. The enzyme catalyses L-gulonate + NAD(+) = 3-dehydro-L-gulonate + NADH + H(+). Inhibited by malonate. Functionally, has high L-gulonate 3-dehydrogenase activity. It also exhibits low dehydrogenase activity toward L-3-hydroxybutyrate (HBA) and L-threonate. The polypeptide is Lambda-crystallin homolog (CRYL1) (Bos taurus (Bovine)).